A 340-amino-acid chain; its full sequence is MSMIVIDGSYGEGGGQILRTSVALSVITGKPVRIYNIRANRPNPGLRPQHMHGILALKELSGAKVKGAQVGSTVLEFYPGRARPRHIRVPIKTAGSVTLVLQALLPAMAFIGGSFEITGGTDVPWSPPVDYLRHVTLFALEKMGLRAEIEIKRRGHYPKGGGLVVGRVEPWEERKPLVALEWRHIELFGGISHATNLPEHVASRQAKAARERLSEFYDVPINIYEEVSRSLGPGSGIVVWAETDVLRLGGDALGKRGKPAEAVGREAADELLEQLTSRAAVDRFLGDQLVPFLAFAGGEIKVAEITNHLVTNVWVVEQFLGKIFEVEGEVGEPGRVRVVG.

ATP is bound by residues Gln102 and 284–288; that span reads FLGDQ. The Tele-AMP-histidine intermediate role is filled by His308.

It belongs to the RNA 3'-terminal cyclase family. Type 1 subfamily.

The protein localises to the cytoplasm. It catalyses the reaction a 3'-end 3'-phospho-ribonucleotide-RNA + ATP = a 3'-end 2',3'-cyclophospho-ribonucleotide-RNA + AMP + diphosphate. Functionally, catalyzes the conversion of 3'-phosphate to a 2',3'-cyclic phosphodiester at the end of RNA. The mechanism of action of the enzyme occurs in 3 steps: (A) adenylation of the enzyme by ATP; (B) transfer of adenylate to an RNA-N3'P to produce RNA-N3'PP5'A; (C) and attack of the adjacent 2'-hydroxyl on the 3'-phosphorus in the diester linkage to produce the cyclic end product. The biological role of this enzyme is unknown but it is likely to function in some aspects of cellular RNA processing. This Thermococcus onnurineus (strain NA1) protein is RNA 3'-terminal phosphate cyclase.